The sequence spans 924 residues: Hexokinase-3 (924 aa).

A disordered region spans residues 1–27 (MAAIEPSGLHPGERDSSCPQEGIPRPS). 2 Hexokinase domains span residues 27-471 (SGSL…MVTA) and 477-913 (ATHR…LVTR). The segment at 84-220 (HGTEQGDFLV…TYNIDVVAMV (137 aa)) is hexokinase small subdomain 1. 95–102 (ELGATGAS) lines the ATP pocket. 95–104 (ELGATGASLR) lines the D-glucose 6-phosphate pocket. Residues Ser-168, 185–186 (TK), and 221–222 (ND) each bind D-glucose. The interval 221-460 (NDTVGTMMGC…CDVSFIPSVD (240 aa)) is hexokinase large subdomain 1. Residues Asp-222 and Thr-245 each coordinate D-glucose 6-phosphate. Residues Asn-248, Glu-273, and 304 to 307 (QRFE) each bind D-glucose. 426–428 (GGR) is a D-glucose 6-phosphate binding site. ATP contacts are provided by residues 438–439 (CI) and 542–547 (DLGGTN). Residues 531–662 (DGSERGDFLA…AVELNVVAIV (132 aa)) form a hexokinase small subdomain 2 region. 542–546 (DLGGT) lines the D-glucose 6-phosphate pocket. Residues 610 to 611 (SF), 627 to 628 (TK), and 663 to 664 (ND) each bind D-glucose. The hexokinase large subdomain 2 stretch occupies residues 663–902 (NDTVGTMMSC…CTVTFLQSED (240 aa)). 2 residues coordinate D-glucose 6-phosphate: Asp-664 and Thr-687. An ATP-binding site is contributed by Thr-687. D-glucose is bound by residues 689–690 (TN), Glu-715, and Glu-749. Residues 754–755 (GM), 791–795 (TKFLS), and 870–874 (TLYKL) contribute to the ATP site. Residues 868–870 (DGT) and Ser-904 each bind D-glucose 6-phosphate.

It belongs to the hexokinase family.

It catalyses the reaction a D-hexose + ATP = a D-hexose 6-phosphate + ADP + H(+). The enzyme catalyses D-fructose + ATP = D-fructose 6-phosphate + ADP + H(+). It carries out the reaction D-glucose + ATP = D-glucose 6-phosphate + ADP + H(+). Its pathway is carbohydrate metabolism; hexose metabolism. The protein operates within carbohydrate degradation; glycolysis; D-glyceraldehyde 3-phosphate and glycerone phosphate from D-glucose: step 1/4. Hexokinase is an allosteric enzyme inhibited by its product D-glucose 6-phosphate. In terms of biological role, catalyzes the phosphorylation of hexose, such as D-glucose and D-fructose, to hexose 6-phosphate (D-glucose 6-phosphate and D-fructose 6-phosphate, respectively). Mediates the initial step of glycolysis by catalyzing phosphorylation of D-glucose to D-glucose 6-phosphate. This is Hexokinase-3 from Rattus norvegicus (Rat).